The chain runs to 181 residues: TATA-box-binding protein (181 aa).

2 consecutive repeat copies span residues 8–84 (IENI…VDLM) and 99–175 (IQNI…YDRL).

The protein belongs to the TBP family.

Functionally, general factor that plays a role in the activation of archaeal genes transcribed by RNA polymerase. Binds specifically to the TATA box promoter element which lies close to the position of transcription initiation. This chain is TATA-box-binding protein, found in Methanobrevibacter smithii (strain ATCC 35061 / DSM 861 / OCM 144 / PS).